The sequence spans 519 residues: Cyclic AMP-responsive element-binding protein 3-like protein 1 (519 aa).

Residues 1-60 (MDAVLEPFPADRLFPGSSFLDLGDLNESDFLNNAHFPEHLDHFTENMEDFSNDLFSSFFD) are required for transcriptional activation. Residues 1-374 (MDAVLEPFPA…YKMAATQTGT (374 aa)) are Cytoplasmic-facing. Positions 71–98 (LDMELDSPTPGIQAEHSYSLSGDSAPQS) are disordered. Polar residues predominate over residues 86 to 97 (HSYSLSGDSAPQ). A Glycyl lysine isopeptide (Lys-Gly) (interchain with G-Cter in SUMO2) cross-link involves residue K184. Residues 200-259 (DLVQMPPTPPSSHGSDSDGSQSPRSLPPSSPVRPMARSSTAISTSPLLTAPHKLQGTSGP) are disordered. Residues 210–223 (SSHGSDSDGSQSPR) are compositionally biased toward low complexity. Positions 236 to 246 (RSSTAISTSPL) are enriched in polar residues. The bZIP domain occupies 290-353 (ALKRVRRKIK…RTLLQQLQKL (64 aa)). The segment at 292–321 (KRVRRKIKNKISAQESRRKKKEYVECLEKK) is basic motif. The leucine-zipper stretch occupies residues 332 to 353 (LWKKVETLENANRTLLQQLQKL). A helical; Signal-anchor for type II membrane protein transmembrane segment spans residues 375 to 395 (CLMVAALCFVLVLGSLVPCLP). The short motif at 392–395 (PCLP) is the MBTPS2 recognition element. Topologically, residues 396–519 (EFSSGSQTVK…LGPNTTIKLS (124 aa)) are lumenal. The MBTPS1 recognition signature appears at 423–426 (RSLL). The segment at 484–519 (EAWPKDGGNGTSPDFSHSKEWFHDRDLGPNTTIKLS) is disordered. N492 carries N-linked (GlcNAc...) asparagine glycosylation. A compositionally biased stretch (basic and acidic residues) spans 499–510 (SHSKEWFHDRDL). N-linked (GlcNAc...) asparagine glycosylation occurs at N513.

This sequence belongs to the bZIP family. ATF subfamily. Interacts with SMAD4, the interaction takes place upon TGFB1 induction and SMAD4 acts as a CREB3L1 coactivator to induce the expression of genes involved in assembly of collagen extracellular matrix. Upon ER stress or DNA damage, translocated to the Golgi apparatus, where it is processed by regulated intramembrane proteolysis (RIP) to release the cytosol-facing N-terminal transcription factor domain. The cleavage is performed sequentially by site-1 and site-2 proteases (S1P/MBTPS1 and S2P/MBTPS2). RIP is induced by TGFB1 and ceramide. Post-translationally, N-glycosylated. In terms of processing, ubiquitinated by HRD1/SYVN1; undergoes 'Lys-48'-linked ubiquitination, followed by rapid proteasomal degradation under normal conditions. Upon ER stress, SYVN1 E3 ubiquitin-protein ligase dissociates from its substrate, ubiquitination does not occur and CREB3L1 is stabilized. In terms of tissue distribution, expressed in several tissues, with highest levels in pancreas and prostate. Expressed at relatively lower levels in brain.

It localises to the endoplasmic reticulum membrane. Its subcellular location is the nucleus. Functionally, precursor of the transcription factor form (Processed cyclic AMP-responsive element-binding protein 3-like protein 1), which is embedded in the endoplasmic reticulum membrane with N-terminal DNA-binding and transcription activation domains oriented toward the cytosolic face of the membrane. In response to ER stress or DNA damage, transported to the Golgi, where it is cleaved in a site-specific manner by resident proteases S1P/MBTPS1 and S2P/MBTPS2. The released N-terminal cytosolic domain is translocated to the nucleus where it activates transcription of specific target genes involved in the cell-cycle progression inhibition. Its function is as follows. Transcription factor involved in cell type specific DNA damage and unfolded protein response (UPR). Binds the DNA consensus sequence 5'-GTGXGCXGC-3'. Plays a critical role in bone formation through the transcription of COL1A1, and possibly COL1A2, and the secretion of bone matrix proteins. Directly binds to the UPR element (UPRE)-like sequence in an osteoblast-specific COL1A1 promoter region and induces its transcription. Does not regulate COL1A1 in other tissues, such as skin. Required to protect astrocytes from ER stress-induced cell death. In astrocytes, binds to the cAMP response element (CRE) of the BiP/HSPA5 promoter and participate in its transcriptional activation. In astrocytes and osteoblasts, upon DNA damage, inhibits cell-cycle progression after G2/M phase by binding to promoters and activating transcription of genes encoding cell-cycle inhibitors, such as p21/CDKN1A. Required for TGFB1 to activate genes involved in the assembly of collagen extracellular matrix. In terms of biological role, (Microbial infection) May play a role in limiting virus spread by inhibiting proliferation of virus-infected cells. Upon infection with diverse DNA and RNA viruses, inhibits cell-cycle progression by binding to promoters and activating transcription of genes encoding cell-cycle inhibitors, such as p21/CDKN1A. This chain is Cyclic AMP-responsive element-binding protein 3-like protein 1, found in Homo sapiens (Human).